The following is a 316-amino-acid chain: Protoheme IX farnesyltransferase (316 aa).

9 helical membrane-spanning segments follow: residues 34–54 (VMSL…GHIN), 55–75 (PFIG…SGAL), 95–115 (IPAG…LSAF), 118–138 (IILG…TIFF), 155–175 (IVIG…CVTG), 182–202 (IVLF…LALF), 228–250 (IVIY…FASL), 254–273 (AFAT…VLRM), and 287–307 (FAFS…DYAI).

It belongs to the UbiA prenyltransferase family. Protoheme IX farnesyltransferase subfamily.

Its subcellular location is the cell inner membrane. It catalyses the reaction heme b + (2E,6E)-farnesyl diphosphate + H2O = Fe(II)-heme o + diphosphate. It participates in porphyrin-containing compound metabolism; heme O biosynthesis; heme O from protoheme: step 1/1. Functionally, converts heme B (protoheme IX) to heme O by substitution of the vinyl group on carbon 2 of heme B porphyrin ring with a hydroxyethyl farnesyl side group. This is Protoheme IX farnesyltransferase from Rhizobium meliloti (strain 1021) (Ensifer meliloti).